Consider the following 178-residue polypeptide: Large ribosomal subunit protein uL10 (178 aa).

Belongs to the universal ribosomal protein uL10 family. In terms of assembly, part of the ribosomal stalk of the 50S ribosomal subunit. The N-terminus interacts with L11 and the large rRNA to form the base of the stalk. The C-terminus forms an elongated spine to which L12 dimers bind in a sequential fashion forming a multimeric L10(L12)X complex.

In terms of biological role, forms part of the ribosomal stalk, playing a central role in the interaction of the ribosome with GTP-bound translation factors. In Gloeothece citriformis (strain PCC 7424) (Cyanothece sp. (strain PCC 7424)), this protein is Large ribosomal subunit protein uL10.